The sequence spans 915 residues: Metabotropic glutamate receptor 7 (915 aa).

The signal sequence occupies residues 1-34 (MVQLGKLLRVLTLMKFPCCVLEVLLCVLAAAARG). Residues 35–590 (QEMYAPHSIR…IIKLEWHSPW (556 aa)) lie on the Extracellular side of the membrane. A disulfide bridge links Cys-67 with Cys-109. Asn-98 is a glycosylation site (N-linked (GlcNAc...) asparagine). Residues Ser-159, 180–182 (AST), Tyr-230, and Asp-314 each bind L-glutamate. Disulfide bonds link Cys-249-Cys-541, Cys-374-Cys-390, Cys-430-Cys-437, Cys-523-Cys-542, Cys-527-Cys-545, Cys-548-Cys-560, and Cys-563-Cys-576. Lys-407 serves as a coordination point for L-glutamate. N-linked (GlcNAc...) asparagine glycosylation is found at Asn-458 and Asn-486. Asn-572 carries an N-linked (GlcNAc...) asparagine glycan. The chain crosses the membrane as a helical span at residues 591 to 615 (AVIPVFLAMLGIIATIFVMATFIRY). At 616 to 627 (NDTPIVRASGRE) the chain is on the cytoplasmic side. A helical membrane pass occupies residues 628–648 (LSYVLLTGIFLCYIITFLMIA). Over 649 to 654 (KPDVAV) the chain is Extracellular. The chain crosses the membrane as a helical span at residues 655–675 (CSFRRVFLGLGMCISYAALLT). Topologically, residues 676–702 (KTNRIYRIFEQGKKSVTAPRLISPTSQ) are cytoplasmic. A helical membrane pass occupies residues 703-723 (LAITSSLISVQLLGVFIWFGV). Residues 724–753 (DPPNIIIDYDEHKTMNPEQARGVLKCDITD) lie on the Extracellular side of the membrane. The chain crosses the membrane as a helical span at residues 754–775 (LQIICSLGYSILLMVTCTVYAI). The Cytoplasmic portion of the chain corresponds to 776–788 (KTRGVPENFNEAK). A helical transmembrane segment spans residues 789–810 (PIGFTMYTTCIVWLAFIPIFFG). Over 811–825 (TAQSAEKLYIQTTTL) the chain is Extracellular. The helical transmembrane segment at 826-850 (TISMNLSASVALGMLYMPKVYIIIF) threads the bilayer. Residues 851-915 (HPELNVQKRK…KYVSYNNLVI (65 aa)) lie on the Cytoplasmic side of the membrane. The disordered stretch occupies residues 874–895 (SRLSHKPSDRPNGEAKTELCEN). The span at 879 to 892 (KPSDRPNGEAKTEL) shows a compositional bias: basic and acidic residues. A Phosphoserine modification is found at Ser-900.

Belongs to the G-protein coupled receptor 3 family. Homodimer. Interacts with PICK1.

Its subcellular location is the cell membrane. Its function is as follows. G-protein coupled receptor activated by glutamate that regulates axon outgrowth through the MAPK-cAMP-PKA signaling pathway during neuronal development. Ligand binding causes a conformation change that triggers signaling via guanine nucleotide-binding proteins (G proteins) and modulates the activity of downstream effectors, such as adenylate cyclase that it inhibits. The chain is Metabotropic glutamate receptor 7 (Grm7) from Mus musculus (Mouse).